A 136-amino-acid chain; its full sequence is ATP synthase epsilon chain (136 aa).

It belongs to the ATPase epsilon chain family. In terms of assembly, F-type ATPases have 2 components, CF(1) - the catalytic core - and CF(0) - the membrane proton channel. CF(1) has five subunits: alpha(3), beta(3), gamma(1), delta(1), epsilon(1). CF(0) has three main subunits: a, b and c.

It localises to the cell inner membrane. Functionally, produces ATP from ADP in the presence of a proton gradient across the membrane. The sequence is that of ATP synthase epsilon chain from Myxococcus xanthus (strain DK1622).